The following is a 477-amino-acid chain: UDP-N-acetylmuramoylalanine--D-glutamate ligase (477 aa).

Residue 127-133 participates in ATP binding; it reads GTNGKTT.

The protein belongs to the MurCDEF family.

It is found in the cytoplasm. It catalyses the reaction UDP-N-acetyl-alpha-D-muramoyl-L-alanine + D-glutamate + ATP = UDP-N-acetyl-alpha-D-muramoyl-L-alanyl-D-glutamate + ADP + phosphate + H(+). The protein operates within cell wall biogenesis; peptidoglycan biosynthesis. Its function is as follows. Cell wall formation. Catalyzes the addition of glutamate to the nucleotide precursor UDP-N-acetylmuramoyl-L-alanine (UMA). This chain is UDP-N-acetylmuramoylalanine--D-glutamate ligase, found in Prochlorococcus marinus (strain MIT 9515).